Consider the following 449-residue polypeptide: UDP-N-acetylmuramoylalanine--D-glutamate ligase (449 aa).

118–124 (GTNGKTT) lines the ATP pocket.

This sequence belongs to the MurCDEF family.

The protein resides in the cytoplasm. It catalyses the reaction UDP-N-acetyl-alpha-D-muramoyl-L-alanine + D-glutamate + ATP = UDP-N-acetyl-alpha-D-muramoyl-L-alanyl-D-glutamate + ADP + phosphate + H(+). Its pathway is cell wall biogenesis; peptidoglycan biosynthesis. In terms of biological role, cell wall formation. Catalyzes the addition of glutamate to the nucleotide precursor UDP-N-acetylmuramoyl-L-alanine (UMA). This Staphylococcus epidermidis (strain ATCC 12228 / FDA PCI 1200) protein is UDP-N-acetylmuramoylalanine--D-glutamate ligase.